Reading from the N-terminus, the 97-residue chain is Large ribosomal subunit protein eL21 (97 aa).

The segment covering 1–24 (MVQKAHSFRRKTRKKLRKHPRRRG) has biased composition (basic residues). A disordered region spans residues 1 to 25 (MVQKAHSFRRKTRKKLRKHPRRRGL).

The protein belongs to the eukaryotic ribosomal protein eL21 family.

In Pyrococcus abyssi (strain GE5 / Orsay), this protein is Large ribosomal subunit protein eL21 (rpl21e).